Reading from the N-terminus, the 775-residue chain is Probable ubiquitin carboxyl-terminal hydrolase creB (775 aa).

Residues 1–45 (MGSFLRSFRHNGGSTAPSVGAVPAKKEPQPPPMTPLEKRLLDMGP) are disordered. Residues 36 to 45 (LEKRLLDMGP) show a composition bias toward basic and acidic residues. A USP domain is found at 55–468 (YGMENYGNTC…CAYVLFYQET (414 aa)). The Nucleophile role is filled by C64. Disordered regions lie at residues 113 to 146 (EAEA…DSPE) and 238 to 269 (ASKQ…KTPN). Residues 256 to 269 (SVDQSSSTGSKTPN) are compositionally biased toward polar residues. The Proton acceptor role is filled by H419. A disordered region spans residues 496 to 775 (LKQNGFPQSP…LRKKSFSILS (280 aa)). Low complexity-rich tracts occupy residues 546 to 566 (ESAP…SPLS) and 576 to 585 (ERVTTVATPP). A coiled-coil region spans residues 586 to 653 (KNDALAKKER…ASKAEEDRRL (68 aa)). The segment covering 589–662 (ALAKKERARE…LSHENGKEKQ (74 aa)) has biased composition (basic and acidic residues). Positions 668 to 679 (RLKRGSKSLSHR) are enriched in basic residues. The segment covering 705-725 (SQTGPTSEQQQQQQQQQSPPN) has biased composition (low complexity). Basic and acidic residues predominate over residues 739–757 (TIREDEQVNHKDSKHERTG). Residues 758 to 775 (HGKWRSFSLRKKSFSILS) show a composition bias toward basic residues.

This sequence belongs to the peptidase C19 family. As to quaternary structure, interacts with creA, creC and qutD.

The enzyme catalyses Thiol-dependent hydrolysis of ester, thioester, amide, peptide and isopeptide bonds formed by the C-terminal Gly of ubiquitin (a 76-residue protein attached to proteins as an intracellular targeting signal).. In terms of biological role, ubiquitin thioesterase component of the regulatory network controlling carbon source utilization through ubiquitination and deubiquitination involving creA, creB, creC, creD and acrB. Deubiquitinates the creA catabolic repressor and the quinate permease qutD. Also plays a role in response to carbon starvation and the control of extracellular proteases activity. This chain is Probable ubiquitin carboxyl-terminal hydrolase creB (creB), found in Aspergillus fumigatus (strain ATCC MYA-4609 / CBS 101355 / FGSC A1100 / Af293) (Neosartorya fumigata).